A 212-amino-acid polypeptide reads, in one-letter code: Peptide methionine sulfoxide reductase MsrA (212 aa).

Residue Cys-52 is part of the active site.

This sequence belongs to the MsrA Met sulfoxide reductase family.

It catalyses the reaction L-methionyl-[protein] + [thioredoxin]-disulfide + H2O = L-methionyl-(S)-S-oxide-[protein] + [thioredoxin]-dithiol. The catalysed reaction is [thioredoxin]-disulfide + L-methionine + H2O = L-methionine (S)-S-oxide + [thioredoxin]-dithiol. Has an important function as a repair enzyme for proteins that have been inactivated by oxidation. Catalyzes the reversible oxidation-reduction of methionine sulfoxide in proteins to methionine. The polypeptide is Peptide methionine sulfoxide reductase MsrA (Salmonella choleraesuis (strain SC-B67)).